Consider the following 1216-residue polypeptide: Apical endosomal glycoprotein (1216 aa).

The N-terminal stretch at 1-22 (MPLSSHLLPALVLFLAGSSGWA) is a signal peptide. Topologically, residues 23-1151 (WVPNHCRSPG…SPGNTAAPGS (1129 aa)) are extracellular. Positions 26–53 (NHCRSPGQAVCNFVCDCRDCSDEAQCGY) constitute an LDL-receptor class A 1; truncated domain. Residues 64–222 (FACDFEQDPC…DDLEFWDCGL (159 aa)) form the MAM 1 domain. The N-linked (GlcNAc...) asparagine glycan is linked to Asn203. One can recognise an LDL-receptor class A 2 domain in the interval 228–266 (NCPPGHHHCQNKVCVEPQQLCDGEDNCGDLSDENPLTCG). 3 disulfide bridges follow: Cys229/Cys241, Cys236/Cys254, and Cys248/Cys265. The region spanning 269–425 (IATDFETGLG…DLILSDHCRP (157 aa)) is the MAM 2 domain. The disordered stretch occupies residues 280-307 (WNRSEGWSRNHRAGGPERPSWPRRDHSR). Residues Asn281 and Asn339 are each glycosylated (N-linked (GlcNAc...) asparagine). The segment at 429-455 (VSTLQPLPPGPRAPAPQPLPPSSRLQD) is disordered. Residues 434-449 (PLPPGPRAPAPQPLPP) are compositionally biased toward pro residues. Residues 456–491 (SCKQGHLACGDLCVPPEQLCDFEEQCAGGEDEQACG) form the LDL-receptor class A 3 domain. 3 disulfides stabilise this stretch: Cys457–Cys468, Cys464–Cys481, and Cys475–Cys490. MAM domains follow at residues 491–644 (GTTD…DCSP), 654–809 (VSCN…PCWA), 811–969 (NYCS…PCPQ), and 971–1138 (GSCD…HCQQ). Residues Asn583 and Asn636 are each glycosylated (N-linked (GlcNAc...) asparagine). N-linked (GlcNAc...) asparagine glycosylation occurs at Asn835. Residues 1152–1172 (VPAVVGSALLLLMLLVLLGLG) form a helical membrane-spanning segment. At 1173–1216 (GRRWLQKKGSCPFQSNTEATAPGFDNILFNADGVTLPASVTSDP) the chain is on the cytoplasmic side.

The protein resides in the membrane. In terms of biological role, probably involved in the sorting and selective transport of receptors and ligands across polarized epithelia. The sequence is that of Apical endosomal glycoprotein from Homo sapiens (Human).